The following is a 189-amino-acid chain: WASH complex subunit homolog 3 (189 aa).

The stretch at 35-74 (MTEMLNNFGNKMEDILEKAEQSLDTADRKLRLMESKLAGM) forms a coiled coil. 2 disordered regions span residues 76–101 (LEDKSTTATPSSAPEIDEIHESNPSS) and 150–189 (SEGVDPSILKRGDEPSRPQAQTSRNYESSGESTASFSDSD). Basic and acidic residues predominate over residues 150–165 (SEGVDPSILKRGDEPS). Polar residues predominate over residues 167-189 (PQAQTSRNYESSGESTASFSDSD). Phosphothreonine is present on Thr-182.

The protein belongs to the CCDC53 family. In terms of assembly, probable component of the WASH complex. Component of the DHIC (ddl-1-containing hsf-1 inhibitory complex), which contains at least ddl-1, ddl-2, hsb-1 and hsf-1. Within the complex, interacts with ddl-2. Within the complex, interacts with hsb-1. Within the complex, interacts with hsf-1. Formation of the DHIC may be dependent upon the Insulin/IGF-1-like signaling (IIS) mediated pathway. Post-translationally, phosphorylated. Phosphorylation on Thr-182 may promote DHIC complex dissociation and consequently the activation of heat-shock transcription factor hsf-1. Phosphorylation is modulated by the Insulin/IGF-1-like signaling (IIS) mediated pathway. In terms of tissue distribution, expressed in pharynx, intestine, body wall muscles, vulva muscles, spermatheca, and several head and tail neurons.

In terms of biological role, acts as a component of the WASH core complex that functions as a nucleation-promoting factor (NPF) at the surface of endosomes, where it recruits and activates the Arp2/3 complex to induce actin polymerization, playing a key role in the fission of tubules that serve as transport intermediates during endosome sorting. Acts as a component of the DHIC (ddl-1-containing hsf-1 inhibitory complex) which modulates lifespan by sequestering the heat-shock transcription factor hsf-1 to negatively regulate its binding to DNA and its transcriptional activity. This chain is WASH complex subunit homolog 3 (ddl-1), found in Caenorhabditis elegans.